Consider the following 208-residue polypeptide: Phosphoheptose isomerase (208 aa).

An SIS domain is found at 38-200 (MAVTLAKGHK…LFENVLALQP (163 aa)). 53 to 55 (NGG) provides a ligand contact to substrate. Residues histidine 62 and glutamate 66 each contribute to the Zn(2+) site. Substrate-binding positions include glutamate 66, 95–96 (ND), 121–123 (STS), serine 126, and glutamine 173. 2 residues coordinate Zn(2+): glutamine 173 and histidine 181.

This sequence belongs to the SIS family. GmhA subfamily. Homotetramer. The cofactor is Zn(2+).

It localises to the cytoplasm. The catalysed reaction is 2 D-sedoheptulose 7-phosphate = D-glycero-alpha-D-manno-heptose 7-phosphate + D-glycero-beta-D-manno-heptose 7-phosphate. Its pathway is carbohydrate biosynthesis; D-glycero-D-manno-heptose 7-phosphate biosynthesis; D-glycero-alpha-D-manno-heptose 7-phosphate and D-glycero-beta-D-manno-heptose 7-phosphate from sedoheptulose 7-phosphate: step 1/1. In terms of biological role, catalyzes the isomerization of sedoheptulose 7-phosphate in D-glycero-D-manno-heptose 7-phosphate. The sequence is that of Phosphoheptose isomerase from Nitratidesulfovibrio vulgaris (strain ATCC 29579 / DSM 644 / CCUG 34227 / NCIMB 8303 / VKM B-1760 / Hildenborough) (Desulfovibrio vulgaris).